The chain runs to 118 residues: MSITSLKNQKEFELINKLGKKLHERYFILVIATKLPKIFLESKYNTFLGIKVSRKLNKKAVVRNKIKRRIRHLIRIIVSDSSFKAIKFAMIIIPRKGFEEINFSHLNYELSKVILRNI.

Belongs to the RnpA family. In terms of assembly, consists of a catalytic RNA component (M1 or rnpB) and a protein subunit.

The enzyme catalyses Endonucleolytic cleavage of RNA, removing 5'-extranucleotides from tRNA precursor.. Functionally, RNaseP catalyzes the removal of the 5'-leader sequence from pre-tRNA to produce the mature 5'-terminus. It can also cleave other RNA substrates such as 4.5S RNA. The protein component plays an auxiliary but essential role in vivo by binding to the 5'-leader sequence and broadening the substrate specificity of the ribozyme. The protein is Ribonuclease P protein component of Rickettsia conorii (strain ATCC VR-613 / Malish 7).